Consider the following 352-residue polypeptide: Peptide chain release factor 1 (352 aa).

Q229 is subject to N5-methylglutamine.

Belongs to the prokaryotic/mitochondrial release factor family. Post-translationally, methylated by PrmC. Methylation increases the termination efficiency of RF1.

Its subcellular location is the cytoplasm. In terms of biological role, peptide chain release factor 1 directs the termination of translation in response to the peptide chain termination codons UAG and UAA. The protein is Peptide chain release factor 1 of Acidiphilium cryptum (strain JF-5).